Consider the following 330-residue polypeptide: PTS system mannose-specific EIIAB component (330 aa).

In terms of domain architecture, PTS EIIA type-4 spans Gly-2 to Ile-130. Residue His-10 is the Tele-phosphohistidine intermediate; for EIIA activity of the active site. Position 10 is a phosphohistidine; by HPr (His-10). Positions Thr-143 to Thr-161 are hinge. The PTS EIIB type-4 domain occupies Gly-166–Lys-330. Residue His-181 is the Pros-phosphohistidine intermediate; for EIIB activity of the active site. Phosphohistidine; by EIIA is present on His-181.

Homodimer.

It is found in the cytoplasm. It localises to the cell membrane. It carries out the reaction D-mannose(out) + N(pros)-phospho-L-histidyl-[protein] = D-mannose 6-phosphate(in) + L-histidyl-[protein]. In terms of biological role, the phosphoenolpyruvate-dependent sugar phosphotransferase system (sugar PTS), a major carbohydrate active transport system, catalyzes the phosphorylation of incoming sugar substrates concomitantly with their translocation across the cell membrane. The enzyme II ManXYZ PTS system is involved in mannose transport. The polypeptide is PTS system mannose-specific EIIAB component (Streptococcus pyogenes serotype M6 (strain ATCC BAA-946 / MGAS10394)).